Here is a 147-residue protein sequence, read N- to C-terminus: Ribonuclease H (147 aa).

Residues 1-142 (MTEIVEIFTD…ADALARSAIT (142 aa)) enclose the RNase H type-1 domain. D10, E48, D70, and D134 together coordinate Mg(2+).

This sequence belongs to the RNase H family. As to quaternary structure, monomer. Mg(2+) serves as cofactor.

It is found in the cytoplasm. The catalysed reaction is Endonucleolytic cleavage to 5'-phosphomonoester.. Its function is as follows. Endonuclease that specifically degrades the RNA of RNA-DNA hybrids. This chain is Ribonuclease H, found in Nitrosococcus oceani (strain ATCC 19707 / BCRC 17464 / JCM 30415 / NCIMB 11848 / C-107).